Consider the following 204-residue polypeptide: NADH-ubiquinone oxidoreductase chain 6 (204 aa).

5 helical membrane passes run 5–25 (IFLF…VIGL), 29–49 (VHSV…LLLL), 56–76 (FMLI…VVMM), 91–111 (LWPI…SSFY), and 151–171 (LLFL…IVLT).

Belongs to the complex I subunit 6 family.

The protein resides in the mitochondrion membrane. It carries out the reaction a ubiquinone + NADH + 5 H(+)(in) = a ubiquinol + NAD(+) + 4 H(+)(out). Functionally, core subunit of the mitochondrial membrane respiratory chain NADH dehydrogenase (Complex I) that is believed to belong to the minimal assembly required for catalysis. Complex I functions in the transfer of electrons from NADH to the respiratory chain. The immediate electron acceptor for the enzyme is believed to be ubiquinone. This Chondrus crispus (Carrageen Irish moss) protein is NADH-ubiquinone oxidoreductase chain 6 (ND6).